The sequence spans 346 residues: MAQNPFKALNINIDKIESALTQNGVTNYSSNVKNERETHISGTYKGIDFLIKLMPSGGNTTIGRASGQNNTYFDEIALIIKENCLYSDTKNFEYTIPKFSDDDRANLFEFLSEEGITITEDNNNDPNCKHQYIMTTSNGDRVRAKIYKRGSIQFQGKYLQIASLINDFMCSILNMKEIVEQKNKEFNVDIKKETIESELHSKLPKSIDKIHEDIKKQLSCSLIMKKIDVEMEDYSTYCFSALRAIEGFIYQILNDVCNPSSSKNLGEYFTENKPKYIIREIHQETINGEIAEVLCECYTYWHENRHGLFHMKPGIADTKTINKLESIAIIDTVCQLIDGGVARLKL.

Can form a complex with cognate antitoxin LsoB and with enterobacteria phage T4 antitoxin Dmd.

Its function is as follows. Toxic component of a type II toxin-antitoxin (TA) system. A stable (half-life over 20 minutes) endoribonuclease that degrades mRNA. Degradation may be translation-stimulated. Overexpression in the absence of cognate antitoxin LsoB causes retarded growth and mRNA degradation, this effect is mitigated upon coexpression with antitoxin LsoB or enterobacteria phage T4 Dmd. Degrades late enterobacteria phage T4 mRNAs, protecting the host against T4 reproduction. In Escherichia coli O157:H7, this protein is mRNA endoribonuclease LsoA (lsoA).